The following is a 1271-amino-acid chain: Protein flightless-1 homolog (1271 aa).

Methionine 1 bears the N-acetylmethionine mark. Residues 1-427 (MEATGVLPFV…SGSKDPLARK (427 aa)) are interaction with LRRFIP1 and LRRFIP2. LRR repeat units follow at residues 7-32 (LPFVRGVDLSGNDFKGGYFPENVKAM), 33-55 (TSLRWLKLNRTGLCYLPEELAAL), 56-78 (QKLEHLSVSHNHLTTLHGELSSL), 80-103 (SLRAIVARANSLKNSGVPDDIFKL), 104-126 (DDLSVLDLSHNQLTECPRELENA), 127-149 (KNMLVLNLSHNGIDSIPNQLFIN), 150-173 (LTDLLYLDLSENRLESLPPQMRRL), 175-196 (HLQTLVLNGNPLLHAQLRQLPA), 197-222 (MMALQTLHLRNTQRTQSNLPTSLEGL), 223-245 (SNLSDVDLSCNDLTRVPECLYTL), 247-268 (SLRRLNLSSNQIAELSLCIDQW), 269-291 (VHLETLNLSRNQLTSLPSAICKL), 293-316 (KLKKLYLNSNKLDFDGLPSGIGKL), 317-339 (TSLEEFMAANNNLELIPESLCRC), 340-363 (PKLKKLVLNKNRLVTLPEAIHFLT), and 365-385 (IQVLDVRENPSLVMPPKPADR). The residue at position 21 (lysine 21) is an N6-acetyllysine. Serine 406 bears the Phosphoserine mark. Serine 436 carries the post-translational modification Phosphoserine; by SGK3. The interaction with ACTL6A stretch occupies residues 495–827 (VGQLPGLTIW…VVSRSLEGTE (333 aa)). 3 Gelsolin-like repeats span residues 509–591 (FVPV…EEFL), 629–703 (NIKL…PGFW), and 759–831 (LMPG…AQVF). The residue at position 860 (serine 860) is a Phosphoserine. The tract at residues 951-977 (KTEDKEGKASAEAREGEEAAAEAEEKQ) is disordered. Residues 952-967 (TEDKEGKASAEAREGE) show a composition bias toward basic and acidic residues. Acidic residues predominate over residues 968–977 (EAAAEAEEKQ). The Gelsolin-like 4 repeat unit spans residues 1183–1256 (KCSDFCQDDL…VRKGNEQRAF (74 aa)).

As to quaternary structure, interacts with actin, ACTL6A and NCOA2. Interacts with CARM1. Interacts with LRRFIP1, LRRFIP2 and MYD88. Upon LPS stimulation, LRRFIP2 competes for MYD88-binding; LRRFIP1 constitutively blocks the interaction with MyD88, even in the absence of LPS. Interacts with the nuclear receptors ESR1 and THRB. Interacts with SGK3. Interacts (via the gelsolin-like region) with TMOD1 and TMOD3. Interacts with LMOD2, VCL, GSN and DES. Expressed in blastocyst.

The protein localises to the nucleus. Its subcellular location is the cytoplasm. It is found in the cytoskeleton. It localises to the microtubule organizing center. The protein resides in the centrosome. The protein localises to the cell junction. Its subcellular location is the focal adhesion. It is found in the cell projection. It localises to the podosome. In terms of biological role, is a regulator of actin polymerization, required for proper myofibril organization and regulation of the length of sarcomeric thin filaments. It also plays a role in the assembly of cardiomyocyte cell adhesion complexes. Regulates cytoskeletal rearrangements involved in cytokinesis and cell migration, by inhibiting Rac1-dependent paxillin phosphorylation. May play a role as coactivator in transcriptional activation by hormone-activated nuclear receptors (NR) and acts in cooperation with NCOA2 and CARM1. Involved in estrogen hormone signaling. The sequence is that of Protein flightless-1 homolog (Flii) from Mus musculus (Mouse).